The sequence spans 437 residues: Succinyl-CoA:cyclohexane-1-carboxylate CoA transferase (437 aa).

Position 221–225 (221–225 (GWGGI)) interacts with CoA. Catalysis depends on Glu-244, which acts as the 5-glutamyl coenzyme A thioester intermediate. CoA contacts are provided by Leu-319, Gly-342, and Lys-367.

It belongs to the acetyl-CoA hydrolase/transferase family. Homodimer.

The catalysed reaction is cyclohexane-1-carboxylate + succinyl-CoA = cyclohexane-1-carbonyl-CoA + succinate. The enzyme catalyses cyclohexane-1-carboxylate + butanoyl-CoA = cyclohexane-1-carbonyl-CoA + butanoate. Acyl-CoA transferase involved in the anaerobic degradation of cyclohexane carboxylic acid (CHC). Catalyzes the activation of CHC to cyclohexane-1-carbonyl-CoA (CHCoA). Benzoic acid and cyclohex-1-ene-1-carboxylic acid can also be used as substrates, but with lower specific activity. Shows highest activity with succinyl-CoA and butanoyl-coA as a CoA donor, and lower activity with crotonyl-CoA, acetyl-CoA, glutaryl-CoA, CH1eneCoA, propionyl-CoA and acetoacetyl-CoA. In vitro, the enzyme can use butanoyl-coA as a CoA donor with greater efficiency than succinyl-CoA. However, succinyl-CoA is the most abundant CoA ester in exponentially grown cells, whereas butanoyl-coA is hardly detectable, indicating that succinyl-CoA is the natural CoA donor for CHC activation. This chain is Succinyl-CoA:cyclohexane-1-carboxylate CoA transferase, found in Geobacter metallireducens (strain ATCC 53774 / DSM 7210 / GS-15).